Consider the following 355-residue polypeptide: UDP-N-acetylglucosamine--N-acetylmuramyl-(pentapeptide) pyrophosphoryl-undecaprenol N-acetylglucosamine transferase (355 aa).

Residues 13 to 15 (TGG), N125, R162, S190, I244, and Q289 each bind UDP-N-acetyl-alpha-D-glucosamine.

Belongs to the glycosyltransferase 28 family. MurG subfamily.

Its subcellular location is the cell inner membrane. It catalyses the reaction di-trans,octa-cis-undecaprenyl diphospho-N-acetyl-alpha-D-muramoyl-L-alanyl-D-glutamyl-meso-2,6-diaminopimeloyl-D-alanyl-D-alanine + UDP-N-acetyl-alpha-D-glucosamine = di-trans,octa-cis-undecaprenyl diphospho-[N-acetyl-alpha-D-glucosaminyl-(1-&gt;4)]-N-acetyl-alpha-D-muramoyl-L-alanyl-D-glutamyl-meso-2,6-diaminopimeloyl-D-alanyl-D-alanine + UDP + H(+). It participates in cell wall biogenesis; peptidoglycan biosynthesis. Functionally, cell wall formation. Catalyzes the transfer of a GlcNAc subunit on undecaprenyl-pyrophosphoryl-MurNAc-pentapeptide (lipid intermediate I) to form undecaprenyl-pyrophosphoryl-MurNAc-(pentapeptide)GlcNAc (lipid intermediate II). The polypeptide is UDP-N-acetylglucosamine--N-acetylmuramyl-(pentapeptide) pyrophosphoryl-undecaprenol N-acetylglucosamine transferase (Neisseria meningitidis serogroup A / serotype 4A (strain DSM 15465 / Z2491)).